The chain runs to 185 residues: Large ribosomal subunit protein uL22 (185 aa).

Belongs to the universal ribosomal protein uL22 family. Part of the 50S ribosomal subunit.

This protein binds specifically to 23S rRNA. It makes multiple contacts with different domains of the 23S rRNA in the assembled 50S subunit and ribosome. In terms of biological role, the globular domain of the protein is located near the polypeptide exit tunnel on the outside of the subunit, while an extended beta-hairpin is found that lines the wall of the exit tunnel in the center of the 70S ribosome. The polypeptide is Large ribosomal subunit protein uL22 (Pyrobaculum neutrophilum (strain DSM 2338 / JCM 9278 / NBRC 100436 / V24Sta) (Thermoproteus neutrophilus)).